We begin with the raw amino-acid sequence, 313 residues long: Ubiquinone biosynthesis protein COQ4, mitochondrial (313 aa).

Positions 197, 198, 201, and 213 each coordinate Zn(2+). Residues 290–313 (QPPDLRELRRKQKKLPEPERENAN) form a disordered region. The segment covering 303 to 313 (KLPEPERENAN) has biased composition (basic and acidic residues).

It belongs to the COQ4 family. Component of a multi-subunit COQ enzyme complex, composed of at least COQ3, COQ4, COQ5, COQ6, COQ7 and COQ9. The cofactor is Zn(2+).

The protein resides in the mitochondrion inner membrane. The catalysed reaction is a 4-hydroxy-3-methoxy-5-(all-trans-polyprenyl)benzoate + H(+) = a 2-methoxy-6-(all-trans-polyprenyl)phenol + CO2. Its pathway is cofactor biosynthesis; ubiquinone biosynthesis. Lyase that catalyzes the C1-decarboxylation of 4-hydroxy-3-methoxy-5-(all-trans-polyprenyl)benzoic acid into 2-methoxy-6-(all-trans-polyprenyl)phenol during ubiquinone biosynthesis. This Meyerozyma guilliermondii (strain ATCC 6260 / CBS 566 / DSM 6381 / JCM 1539 / NBRC 10279 / NRRL Y-324) (Yeast) protein is Ubiquinone biosynthesis protein COQ4, mitochondrial.